Here is a 120-residue protein sequence, read N- to C-terminus: Large ribosomal subunit protein bL19 (120 aa).

It belongs to the bacterial ribosomal protein bL19 family.

In terms of biological role, this protein is located at the 30S-50S ribosomal subunit interface and may play a role in the structure and function of the aminoacyl-tRNA binding site. This Crocosphaera subtropica (strain ATCC 51142 / BH68) (Cyanothece sp. (strain ATCC 51142)) protein is Large ribosomal subunit protein bL19.